Here is a 580-residue protein sequence, read N- to C-terminus: N(6)-adenosine-methyltransferase catalytic subunit METTL3 (580 aa).

Residues 1 to 70 (MSDTWSSIQA…PKPSTTSVAP (70 aa)) are disordered. An N-acetylserine; alternate modification is found at Ser2. Phosphoserine; alternate is present on Ser2. Residues 28-37 (QDSGHLDLRN) are compositionally biased toward basic and acidic residues. 3 positions are modified to phosphoserine: Ser43, Ser48, and Ser50. Low complexity predominate over residues 55–67 (APTSSGPKPSTTS). Residues Lys177, Lys211, Lys212, and Lys215 each participate in a glycyl lysine isopeptide (Lys-Gly) (interchain with G-Cter in SUMO1) cross-link. A disordered region spans residues 198–217 (LASSASEPAKEPAKKSRKHA). Residues 210–215 (AKKSRK) carry the Nuclear localization signal motif. 3 positions are modified to phosphoserine: Ser219, Ser243, and Ser350. S-adenosyl-L-methionine contacts are provided by residues 377 to 378 (DI) and Asp395. Positions 396 to 410 (PPWDIHMELPYGTLT) are gate loop 1. Interaction with METTL14 stretches follow at residues 450-454 (ERVDE) and 464-480 (QRII…NHGK). An interphase loop region spans residues 462-479 (QLQRIIRTGRTGHWLNHG). The positively charged region required for RNA-binding stretch occupies residues 465-478 (RIIRTGRTGHWLNH). The interval 507–515 (VRSTSHKPD) is gate loop 2. Residues Lys513, 536 to 539 (RPHN), and 549 to 550 (NQ) each bind S-adenosyl-L-methionine.

The protein belongs to the MT-A70-like family. In terms of assembly, heterodimer; heterodimerizes with METTL14 to form an antiparallel heterodimer that constitutes an active methyltransferase. Component of the WMM complex, a N6-methyltransferase complex composed of a catalytic subcomplex, named MAC, and of an associated subcomplex, named MACOM. The MAC subcomplex is composed of METTL3 and METTL14. The MACOM subcomplex is composed of WTAP, ZC3H13, CBLL1/HAKAI, VIRMA, and, in some cases of RBM15 (RBM15 or RBM15B). Interacts with NCBP1/CBP80. Interacts with EIF4E. Interacts with EIF3B. In terms of processing, sumoylation inhibits the N6-adenosine-methyltransferase activity. Sumoylation does not affect subcellular location or interaction with METTL14. Desumoylated by SENP1. As to expression, present in both germ cells and somatic cells during testis development (at protein level).

The protein resides in the nucleus. It is found in the nucleus speckle. It localises to the cytoplasm. The enzyme catalyses an adenosine in mRNA + S-adenosyl-L-methionine = an N(6)-methyladenosine in mRNA + S-adenosyl-L-homocysteine + H(+). With respect to regulation, methyltransferase activity is regulated by miRNAs via a sequence pairing mechanism. Methyltransferase activity is inhibited by sumoylation. Functionally, the METTL3-METTL14 heterodimer forms a N6-methyltransferase complex that methylates adenosine residues at the N(6) position of some RNAs and regulates various processes such as the circadian clock, differentiation of embryonic and hematopoietic stem cells, cortical neurogenesis, response to DNA damage, differentiation of T-cells and primary miRNA processing. In the heterodimer formed with METTL14, METTL3 constitutes the catalytic core. N6-methyladenosine (m6A), which takes place at the 5'-[AG]GAC-3' consensus sites of some mRNAs, plays a role in mRNA stability, processing, translation efficiency and editing. M6A acts as a key regulator of mRNA stability: methylation is completed upon the release of mRNA into the nucleoplasm and promotes mRNA destabilization and degradation. In embryonic stem cells (ESCs), m6A methylation of mRNAs encoding key naive pluripotency-promoting transcripts results in transcript destabilization, promoting differentiation of ESCs. M6A regulates the length of the circadian clock: acts as an early pace-setter in the circadian loop by putting mRNA production on a fast-track for facilitating nuclear processing, thereby providing an early point of control in setting the dynamics of the feedback loop. M6A also regulates circadian regulation of hepatic lipid metabolism. M6A regulates spermatogonial differentiation and meiosis and is essential for male fertility and spermatogenesis. Also required for oogenesis. Involved in the response to DNA damage: in response to ultraviolet irradiation, METTL3 rapidly catalyzes the formation of m6A on poly(A) transcripts at DNA damage sites, leading to the recruitment of POLK to DNA damage sites. M6A is also required for T-cell homeostasis and differentiation: m6A methylation of transcripts of SOCS family members (SOCS1, SOCS3 and CISH) in naive T-cells promotes mRNA destabilization and degradation, promoting T-cell differentiation. Inhibits the type I interferon response by mediating m6A methylation of IFNB. M6A also regulates cortical neurogenesis: m6A methylation of transcripts related to transcription factors, neural stem cells, the cell cycle and neuronal differentiation during brain development promotes their destabilization and decay, promoting differentiation of radial glial cells. M6A also takes place in other RNA molecules, such as primary miRNA (pri-miRNAs). Mediates m6A methylation of Xist RNA, thereby participating in random X inactivation: m6A methylation of Xist leads to target YTHDC1 reader on Xist and promote transcription repression activity of Xist. METTL3 mediates methylation of pri-miRNAs, marking them for recognition and processing by DGCR8. Acts as a positive regulator of mRNA translation independently of the methyltransferase activity: promotes translation by interacting with the translation initiation machinery in the cytoplasm. The polypeptide is N(6)-adenosine-methyltransferase catalytic subunit METTL3 (Mus musculus (Mouse)).